The primary structure comprises 118 residues: Large ribosomal subunit protein bL20 (118 aa).

It belongs to the bacterial ribosomal protein bL20 family.

In terms of biological role, binds directly to 23S ribosomal RNA and is necessary for the in vitro assembly process of the 50S ribosomal subunit. It is not involved in the protein synthesizing functions of that subunit. This chain is Large ribosomal subunit protein bL20, found in Psychromonas ingrahamii (strain DSM 17664 / CCUG 51855 / 37).